The sequence spans 409 residues: DNA primase DnaG (409 aa).

In terms of domain architecture, Toprim spans 175–261 (DAIIVVEGRA…EVEELTRKEI (87 aa)). Residues Glu-181, Asp-223, and Asp-225 each contribute to the Mg(2+) site. A compositionally biased stretch (basic and acidic residues) spans 280-289 (ERPKDKEREK). A disordered region spans residues 280 to 322 (ERPKDKEREKGKKPKPKKRPERRGRPRKKKARPKRGPQERRLL). Positions 290–314 (GKKPKPKKRPERRGRPRKKKARPKR) are enriched in basic residues.

It belongs to the archaeal DnaG primase family. As to quaternary structure, forms a ternary complex with MCM helicase and DNA. Component of the archaeal exosome complex. Mg(2+) serves as cofactor.

It carries out the reaction ssDNA + n NTP = ssDNA/pppN(pN)n-1 hybrid + (n-1) diphosphate.. RNA polymerase that catalyzes the synthesis of short RNA molecules used as primers for DNA polymerase during DNA replication. Also part of the exosome, which is a complex involved in RNA degradation. Acts as a poly(A)-binding protein that enhances the interaction between heteromeric, adenine-rich transcripts and the exosome. The chain is DNA primase DnaG from Methanopyrus kandleri (strain AV19 / DSM 6324 / JCM 9639 / NBRC 100938).